A 322-amino-acid polypeptide reads, in one-letter code: uncharacterized protein (322 aa).

A helical membrane pass occupies residues 212–234 (VCALLVGAISVATAGAAFSIIIV).

The protein resides in the membrane. This is an uncharacterized protein from Rickettsia prowazekii (strain Madrid E).